Consider the following 205-residue polypeptide: Large ribosomal subunit protein uL4 (205 aa).

The disordered stretch occupies residues 44-77 (KRQGTSKVKNRSAVRGGGKKPWRQKGTGRARQGS). Basic residues predominate over residues 51–71 (VKNRSAVRGGGKKPWRQKGTG).

This sequence belongs to the universal ribosomal protein uL4 family. In terms of assembly, part of the 50S ribosomal subunit.

Functionally, one of the primary rRNA binding proteins, this protein initially binds near the 5'-end of the 23S rRNA. It is important during the early stages of 50S assembly. It makes multiple contacts with different domains of the 23S rRNA in the assembled 50S subunit and ribosome. Its function is as follows. Forms part of the polypeptide exit tunnel. This chain is Large ribosomal subunit protein uL4, found in Lactobacillus delbrueckii subsp. bulgaricus (strain ATCC 11842 / DSM 20081 / BCRC 10696 / JCM 1002 / NBRC 13953 / NCIMB 11778 / NCTC 12712 / WDCM 00102 / Lb 14).